Consider the following 629-residue polypeptide: Tudor and KH domain-containing protein homolog (629 aa).

A helical transmembrane segment spans residues 9–29 (LPIALGLSLVTVTAFVAYYVL). KH domains are found at residues 46–109 (INTI…ETLI) and 119–185 (IMSE…KKLV). Residues 198–240 (IEQSKRPPRHSSSPPSPCPSPGDRDADADAQGDVDHTRVKYKR) form a disordered region. Over residues 219–240 (GDRDADADAQGDVDHTRVKYKR) the composition is skewed to basic and acidic residues. A Tudor domain is found at 297–362 (HVSVGQVVAA…CELRADLLRL (66 aa)). A disordered region spans residues 464–526 (PAPSPRPSPP…GDDSKDKDGI (63 aa)).

Belongs to the Tdrkh family. Interacts with (symmetrically methylated) Siwi. Interacts with (symmetrically methylated) Ago3. Interacts with PNLDC1/trimmer; interaction takes place on the mitochondrial surface and recruits PNLDC1/trimmer to Siwi-bound pre-piRNAs.

The protein resides in the mitochondrion outer membrane. Participates in the primary piRNA biogenesis pathway and is required during spermatogenesis to repress transposable elements and prevent their mobilization, which is essential for the germline integrity. The piRNA metabolic process mediates the repression of transposable elements during meiosis by forming complexes composed of piRNAs and Piwi proteins (Siwi or Ago3) and govern the methylation and subsequent repression of transposons. Required for the final steps of primary piRNA biogenesis by participating in the processing of 31-37 nt intermediates into mature piRNAs: acts by recruiting the exonuclease PNLDC1/trimmer to Siwi-bound pre-piRNAs. The polypeptide is Tudor and KH domain-containing protein homolog (Bombyx mori (Silk moth)).